The primary structure comprises 637 residues: MQGTVNSERLKFDAEVGKVLKLVIHSLYTNKDIFLRELISNASDACDKLRYQSLSNQDLMDAGSELKIVISVDKDKNRLYISDNGIGMNREDLINNLGTIAHSGTQKFLDAINSGASSQQGVVELIGKFGVGFYSAFMVASEVIVESCKAGESVGYQWKSSGDGEFVISQLESDQVSRGTRITLALKPEECEFVDKFRIEHIVTTYSYHINYPVYFLNDKGEEERLNSEAAIWTKAKDEISAEEHQNFFRTVAHVGGEPWMILHNKNEGVIEYTNLLYIPSIKPFDLFHPDRKCSVKLYVNKVFITEDNVQIIPQYLRFLKGIIDSSDLPLNISRETLQNNKIIEKIKRSLVKRVLSELKKKAESNIEDYTKFWDNFGSVLKEGLCESMNTEFREELISVCRFYSTHSNDSLISLEDYIERMKPEQNNIYYLTGNDLDSIKKSPQLEGFVSRGIEVLLLVDPVDDFWTNVVTDYQKVPLRSVIRADEDLEKFSDVEKDDESKESQNEDAQSKEKVDKFISYAAQVLTNLVSNVRVSKKLTDSPVCLAVADGSMDIRMERFLREQKQLNYKSTKILEINSKHPIVSKMIDQYAENGENAVLCNMLHLLLGQACILEGEELQNVSDFAERMNNVLSQIN.

An a; substrate-binding region spans residues 1-335 (MQGTVNSERL…SSDLPLNISR (335 aa)). The segment at 336 to 559 (ETLQNNKIIE…DGSMDIRMER (224 aa)) is b. Residues 560–637 (FLREQKQLNY…RMNNVLSQIN (78 aa)) form a c region.

Belongs to the heat shock protein 90 family. Homodimer.

The protein resides in the cytoplasm. Molecular chaperone. Has ATPase activity. The chain is Chaperone protein HtpG from Ehrlichia ruminantium (strain Welgevonden).